The sequence spans 122 residues: Acidic phospholipase A2 CTs-A3 (122 aa).

7 disulfides stabilise this stretch: Cys26–Cys116, Cys28–Cys44, Cys43–Cys95, Cys49–Cys122, Cys50–Cys88, Cys57–Cys81, and Cys75–Cys86. Ca(2+) is bound by residues Tyr27, Gly29, and Gly31. Residue His47 is part of the active site. Asp48 lines the Ca(2+) pocket. Asp89 is an active-site residue.

Requires Ca(2+) as cofactor. As to expression, expressed by the venom gland.

It is found in the secreted. The enzyme catalyses a 1,2-diacyl-sn-glycero-3-phosphocholine + H2O = a 1-acyl-sn-glycero-3-phosphocholine + a fatty acid + H(+). Snake venom phospholipase A2 (PLA2) that shows a moderate inhibition of ADP-induced human platelet aggregation when tested on platelet rich plasma. Exhibits moderate hydrolytic activities and prefers the anionic micelles (dPPC with deoxycholate) to the zwitterionic micelles (dPPC with Triton X-100). PLA2 catalyzes the calcium-dependent hydrolysis of the 2-acyl groups in 3-sn-phosphoglycerides. The sequence is that of Acidic phospholipase A2 CTs-A3 from Trimeresurus stejnegeri (Chinese green tree viper).